A 669-amino-acid chain; its full sequence is Sodium-dependent phosphate transporter (669 aa).

Residues 1–6 lie on the Extracellular side of the membrane; it reads MVTGPD. The chain crosses the membrane as a helical span at residues 7–27; sequence MLWLVITSGIACFFMAFVTGA. The Cytoplasmic segment spans residues 28 to 47; that stretch reads NDIANTFSTSIGSKAISIKK. Residues 48 to 68 form a helical membrane-spanning segment; it reads ALIVAFFFEALGASLLGGTVT. The Extracellular segment spans residues 69-86; that stretch reads DSIRSKIINFQVFYDTPE. The chain crosses the membrane as a helical span at residues 87–107; it reads FLMLGMCCALMGATVWLAVAT. A topological domain (cytoplasmic) is located at residue Arg-108. The helical transmembrane segment at 109 to 129 threads the bilayer; it reads AGLPVSTTHSIIGALLGFGLA. Topologically, residues 130–143 are extracellular; that stretch reads TGNMKSIKWEKINN. Residues 144–164 traverse the membrane as a helical segment; sequence IVISWLAAPILAGTCSAIAFT. Topologically, residues 165–186 are cytoplasmic; the sequence is VLRMLILRKKNSFEIIKKMYWF. The chain crosses the membrane as a helical span at residues 187-207; the sequence is LIFLITLPFSVFLIFHNPIVI. Topologically, residues 208-239 are extracellular; sequence NTQCKMKKDGKVIVSSPCYIEDWSAAHSFYAS. A helical transmembrane segment spans residues 240–260; sequence IICILLSSLLTAIGSFVIYII. Topologically, residues 261–502 are cytoplasmic; it reads YNKRINNYNL…YNNGIRGKIK (242 aa). Positions 311–335 are enriched in polar residues; the sequence is AHNNTSNGTKQNQVGNGTKSNNNNV. Disordered regions lie at residues 311-364 and 392-444; these read AHNN…SVEA and TNMN…KNME. The segment covering 342-352 has biased composition (basic and acidic residues); the sequence is KNVKSQQDDSK. Residues 395-433 show a composition bias toward low complexity; it reads NENNNNSNKNNNSNKNNNSNKNNNSNKNNNSNNGNSNEG. Residues 503–523 traverse the membrane as a helical segment; that stretch reads VQWYILLFGGLSMSLGLSIMG. Over 524-542 the chain is Extracellular; it reads YRVIKTVGMKLIKITPARG. The helical transmembrane segment at 543 to 563 threads the bilayer; that stretch reads FTIELISGLVVLFFSICGIPL. Residues 564 to 632 lie on the Cytoplasmic side of the membrane; the sequence is SSTHCAVSSV…TSCVNLRLFR (69 aa). Residues 633-653 traverse the membrane as a helical segment; that stretch reads TVFLSWILTVVFSATVTAGIY. The Extracellular segment spans residues 654-669; that stretch reads SFAAYSPSYIMKMQTV.

It belongs to the inorganic phosphate transporter (PiT) (TC 2.A.20) family.

It is found in the cell membrane. It carries out the reaction 2 Na(+)(out) + phosphate(out) = 2 Na(+)(in) + phosphate(in). Sodium-phosphate symporter which preferentially transports the monovalent form of phosphate with a stoichiometry of two sodium ions per phosphate ion. The chain is Sodium-dependent phosphate transporter from Plasmodium falciparum.